The following is a 1409-amino-acid chain: DNA-directed RNA polymerase subunit beta' (1409 aa).

Residues Cys69, Cys71, Cys84, and Cys87 each contribute to the Zn(2+) site. 3 residues coordinate Mg(2+): Asp461, Asp463, and Asp465. Zn(2+) contacts are provided by Cys805, Cys879, Cys886, and Cys889.

It belongs to the RNA polymerase beta' chain family. In terms of assembly, the RNAP catalytic core consists of 2 alpha, 1 beta, 1 beta' and 1 omega subunit. When a sigma factor is associated with the core the holoenzyme is formed, which can initiate transcription. Requires Mg(2+) as cofactor. It depends on Zn(2+) as a cofactor.

It catalyses the reaction RNA(n) + a ribonucleoside 5'-triphosphate = RNA(n+1) + diphosphate. In terms of biological role, DNA-dependent RNA polymerase catalyzes the transcription of DNA into RNA using the four ribonucleoside triphosphates as substrates. This Anaplasma phagocytophilum (strain HZ) protein is DNA-directed RNA polymerase subunit beta'.